The following is a 151-amino-acid chain: Large ribosomal subunit protein bL9 (151 aa).

It belongs to the bacterial ribosomal protein bL9 family.

Functionally, binds to the 23S rRNA. The polypeptide is Large ribosomal subunit protein bL9 (Chlorobium luteolum (strain DSM 273 / BCRC 81028 / 2530) (Pelodictyon luteolum)).